The primary structure comprises 295 residues: NAD kinase (295 aa).

The active-site Proton acceptor is the Asp-74. NAD(+)-binding positions include 74–75 (DG), 148–149 (ND), His-159, Arg-176, Asp-178, and 189–194 (TAYALS).

The protein belongs to the NAD kinase family. It depends on a divalent metal cation as a cofactor.

It localises to the cytoplasm. The catalysed reaction is NAD(+) + ATP = ADP + NADP(+) + H(+). Functionally, involved in the regulation of the intracellular balance of NAD and NADP, and is a key enzyme in the biosynthesis of NADP. Catalyzes specifically the phosphorylation on 2'-hydroxyl of the adenosine moiety of NAD to yield NADP. The protein is NAD kinase of Legionella pneumophila (strain Paris).